Consider the following 134-residue polypeptide: Large ribosomal subunit protein eL14 (134 aa).

It belongs to the eukaryotic ribosomal protein eL14 family. Component of the large ribosomal subunit (LSU). Mature yeast ribosomes consist of a small (40S) and a large (60S) subunit. The 40S small subunit contains 1 molecule of ribosomal RNA (18S rRNA) and at least 33 different proteins. The large 60S subunit contains 3 rRNA molecules (25S, 5.8S and 5S rRNA) and at least 46 different proteins.

The protein resides in the cytoplasm. The protein localises to the nucleus. In terms of biological role, component of the ribosome, a large ribonucleoprotein complex responsible for the synthesis of proteins in the cell. The small ribosomal subunit (SSU) binds messenger RNAs (mRNAs) and translates the encoded message by selecting cognate aminoacyl-transfer RNA (tRNA) molecules. The large subunit (LSU) contains the ribosomal catalytic site termed the peptidyl transferase center (PTC), which catalyzes the formation of peptide bonds, thereby polymerizing the amino acids delivered by tRNAs into a polypeptide chain. The nascent polypeptides leave the ribosome through a tunnel in the LSU and interact with protein factors that function in enzymatic processing, targeting, and the membrane insertion of nascent chains at the exit of the ribosomal tunnel. The chain is Large ribosomal subunit protein eL14 (rpl14) from Schizosaccharomyces pombe (strain 972 / ATCC 24843) (Fission yeast).